We begin with the raw amino-acid sequence, 1446 residues long: E3 ubiquitin-protein ligase listerin (1446 aa).

HEAT repeat units lie at residues 71 to 108 (QTRE…LTTD), 115 to 153 (MLTM…VTNG), 324 to 361 (SLQK…LLQK), 363 to 399 (ENPA…TFSD), 413 to 450 (EILK…WIIE), 630 to 669 (AENV…AEDE), 684 to 721 (GDFE…FCDA), 1046 to 1083 (LRAL…PAFQ), 1107 to 1144 (SVAR…KLSL), 1165 to 1202 (LLDL…NALN), and 1251 to 1289 (FKSM…RLLI). The RING-type zinc-finger motif lies at 1395-1442 (CTICMMTVHQQTHQLPKIKCKQCKNKFHSNCLYKWFESSNQSTCPLCR).

Belongs to the LTN1 family. Component of the ribosome quality control complex (RQC), composed of at least the E3 ubiquitin ligase ltn1 and nemf. The complex probably also contains tcf25 as well as vcp/p97 and its ubiquitin-binding cofactors. RQC forms a stable complex with 60S ribosomal subunits.

It is found in the cytoplasm. Its subcellular location is the cytosol. It carries out the reaction S-ubiquitinyl-[E2 ubiquitin-conjugating enzyme]-L-cysteine + [acceptor protein]-L-lysine = [E2 ubiquitin-conjugating enzyme]-L-cysteine + N(6)-ubiquitinyl-[acceptor protein]-L-lysine.. It functions in the pathway protein modification; protein ubiquitination. E3 ubiquitin-protein ligase. Component of the ribosome quality control complex (RQC), a ribosome-associated complex that mediates ubiquitination and extraction of incompletely synthesized nascent chains for proteasomal degradation. Ubiquitination leads to vcp/p97 recruitment for extraction and degradation of the incomplete translation product. The polypeptide is E3 ubiquitin-protein ligase listerin (Caenorhabditis elegans).